The following is a 154-amino-acid chain: SsrA-binding protein (154 aa).

Residues 132-154 form a disordered region; that stretch reads KRESIKKRQDKRDMERALKRGAE.

The protein belongs to the SmpB family.

Its subcellular location is the cytoplasm. In terms of biological role, required for rescue of stalled ribosomes mediated by trans-translation. Binds to transfer-messenger RNA (tmRNA), required for stable association of tmRNA with ribosomes. tmRNA and SmpB together mimic tRNA shape, replacing the anticodon stem-loop with SmpB. tmRNA is encoded by the ssrA gene; the 2 termini fold to resemble tRNA(Ala) and it encodes a 'tag peptide', a short internal open reading frame. During trans-translation Ala-aminoacylated tmRNA acts like a tRNA, entering the A-site of stalled ribosomes, displacing the stalled mRNA. The ribosome then switches to translate the ORF on the tmRNA; the nascent peptide is terminated with the 'tag peptide' encoded by the tmRNA and targeted for degradation. The ribosome is freed to recommence translation, which seems to be the essential function of trans-translation. The chain is SsrA-binding protein from Acaryochloris marina (strain MBIC 11017).